Reading from the N-terminus, the 196-residue chain is Pyridoxal 5'-phosphate synthase subunit PdxT (196 aa).

46–48 (GES) provides a ligand contact to L-glutamine. Cys78 acts as the Nucleophile in catalysis. L-glutamine is bound by residues Arg105 and 133 to 134 (IR). Active-site charge relay system residues include His169 and Glu171.

It belongs to the glutaminase PdxT/SNO family. In terms of assembly, in the presence of PdxS, forms a dodecamer of heterodimers. Only shows activity in the heterodimer.

The enzyme catalyses aldehydo-D-ribose 5-phosphate + D-glyceraldehyde 3-phosphate + L-glutamine = pyridoxal 5'-phosphate + L-glutamate + phosphate + 3 H2O + H(+). The catalysed reaction is L-glutamine + H2O = L-glutamate + NH4(+). Its pathway is cofactor biosynthesis; pyridoxal 5'-phosphate biosynthesis. Its function is as follows. Catalyzes the hydrolysis of glutamine to glutamate and ammonia as part of the biosynthesis of pyridoxal 5'-phosphate. The resulting ammonia molecule is channeled to the active site of PdxS. This Geobacillus stearothermophilus (Bacillus stearothermophilus) protein is Pyridoxal 5'-phosphate synthase subunit PdxT.